Here is a 114-residue protein sequence, read N- to C-terminus: Large ribosomal subunit protein P2v (114 aa).

Residues 74–114 (VASGGGGGAAPAAEPASVESKKKEEEKEESEDDGGMMSLFD) form a disordered region. Ser103 carries the post-translational modification Phosphoserine.

This sequence belongs to the eukaryotic ribosomal protein P1/P2 family. P1 and P2 exist as dimers at the large ribosomal subunit. Phosphorylated.

In terms of biological role, plays an important role in the elongation step of protein synthesis. This chain is Large ribosomal subunit protein P2v (RPP2E), found in Arabidopsis thaliana (Mouse-ear cress).